The following is a 420-amino-acid chain: MSLEIEKIHAREILDSRGNPTVEVDVWTCCGFGRAAVPSGASTGTYEALELRDGGDRYDGKGVLKAVRNVNEVIGPKLIGMDVIDQRGVDQIMIEMDGTPNKSNLGANAILGVSLAVAKAAASSLGMPLYRYLGGVSATRLPVPSLNVLNGGKHAGNDLSIQEFMIEPWGADSFSEALRMAAETYHALGRILRGKYGNVATNVGFEGGYAPPISKTRDALDAIMAALDVTGYTEEIKLGLDSAASSFYLDGGYSVDDNRLSPGELIDFYVELVKTYPIVLIEDPFEENAFEEFAELTKKLPDTIIVGDDLYVTNMARIEKGIRMRSTNALLLKLNQIGTVSEAFDAATLAYRNSFKVMVSHRSAETEDSALADVSVAIGAELIKTGAPARSERNAKYNQLLRIQEALGSSASYAGRRRWS.

Gln162 is a binding site for (2R)-2-phosphoglycerate. The active-site Proton donor is the Glu206. Mg(2+)-binding residues include Asp241, Glu282, and Asp308. 4 residues coordinate (2R)-2-phosphoglycerate: Lys333, Arg362, Ser363, and Lys384. The active-site Proton acceptor is Lys333.

The protein belongs to the enolase family. The cofactor is Mg(2+).

It localises to the cytoplasm. The protein localises to the secreted. The protein resides in the cell surface. It carries out the reaction (2R)-2-phosphoglycerate = phosphoenolpyruvate + H2O. The protein operates within carbohydrate degradation; glycolysis; pyruvate from D-glyceraldehyde 3-phosphate: step 4/5. Catalyzes the reversible conversion of 2-phosphoglycerate (2-PG) into phosphoenolpyruvate (PEP). It is essential for the degradation of carbohydrates via glycolysis. The sequence is that of Enolase from Methanothrix thermoacetophila (strain DSM 6194 / JCM 14653 / NBRC 101360 / PT) (Methanosaeta thermophila).